We begin with the raw amino-acid sequence, 845 residues long: ATPase morc-1 (845 aa).

Residues asparagine 43, 88–90 (SAK), and 97–103 (RYGNGLK) contribute to the ATP site. Asparagine 43 is a binding site for Mg(2+). A coiled-coil region spans residues 284–311 (AAYNKILDEKNETVKKCEEEKALVMSEI). An ATP-binding site is contributed by lysine 422. 2 disordered regions span residues 566 to 590 (LPQK…SASS) and 628 to 739 (KMEP…GKAV). Positions 574-590 (SAPSSSDSQNSIRSASS) are enriched in low complexity. The segment covering 637–646 (HDSHIAEVQR) has biased composition (basic and acidic residues).

Predominantly forms monomers and dimers, but multimerizes to form trimers and tetramers upon DNA binding. As to expression, expressed in germline and somatic cells.

It localises to the nucleus. The protein localises to the nuclear body. It carries out the reaction ATP + H2O = ADP + phosphate + H(+). In terms of biological role, binds non-specifically to DNA and forms static foci which grow by recruiting other morc-1 molecules, and thereby stimulates conformational changes and compaction of DNA, which appears to be enhanced by ATP-binding, but does not require ATP activity. Preferentially binds to long DNAs. Compacts and entraps segments of DNA by sequentially forming loops along the DNA, beginning at the free ends of single- and double-tethered DNA. Does not extrude the DNA loops on compacted double-tethered DNA. Involved in gene silencing. Plays a role in germline RNA interference (RNAi), and in particular, the silencing of endogenous small interfering RNA (endo-siRNA) target genes. May play a role in heterochromatin localization and condensation, and the siRNAi-directed trimethylation of 'Lys-9' of histone H3 in hermaphrodite X chromosomes. Promotes transgenerational epigenetic inheritance and germline immortality. The chain is ATPase morc-1 from Caenorhabditis elegans.